The chain runs to 427 residues: UPF0229 protein YeaH (427 aa).

Residues 79–90 (NDHFVQNDRIER) are compositionally biased toward basic and acidic residues. Residues 79-110 (NDHFVQNDRIERPQGGGGGSGSGQGQASQDGE) form a disordered region. Residues 92 to 102 (QGGGGGSGSGQ) show a composition bias toward gly residues.

The protein belongs to the UPF0229 family.

This is UPF0229 protein YeaH from Escherichia coli (strain K12 / MC4100 / BW2952).